Here is a 474-residue protein sequence, read N- to C-terminus: tRNA-2-methylthio-N(6)-dimethylallyladenosine synthase (474 aa).

One can recognise an MTTase N-terminal domain in the interval 3 to 120; it reads KKLHIKTWGC…LPEMINHVQG (118 aa). [4Fe-4S] cluster is bound by residues cysteine 12, cysteine 49, cysteine 83, cysteine 157, cysteine 161, and cysteine 164. The 233-residue stretch at 143-375 folds into the Radical SAM core domain; that stretch reads RAEGPTAFVS…QQRISQQAME (233 aa). The TRAM domain maps to 378-441; that stretch reads RKMVGTVQRV…ASSLRGILLR (64 aa).

Belongs to the methylthiotransferase family. MiaB subfamily. As to quaternary structure, monomer. Requires [4Fe-4S] cluster as cofactor.

It localises to the cytoplasm. The enzyme catalyses N(6)-dimethylallyladenosine(37) in tRNA + (sulfur carrier)-SH + AH2 + 2 S-adenosyl-L-methionine = 2-methylsulfanyl-N(6)-dimethylallyladenosine(37) in tRNA + (sulfur carrier)-H + 5'-deoxyadenosine + L-methionine + A + S-adenosyl-L-homocysteine + 2 H(+). Catalyzes the methylthiolation of N6-(dimethylallyl)adenosine (i(6)A), leading to the formation of 2-methylthio-N6-(dimethylallyl)adenosine (ms(2)i(6)A) at position 37 in tRNAs that read codons beginning with uridine. This is tRNA-2-methylthio-N(6)-dimethylallyladenosine synthase from Yersinia pestis bv. Antiqua (strain Antiqua).